Consider the following 129-residue polypeptide: Large ribosomal subunit protein bL20 (129 aa).

It belongs to the bacterial ribosomal protein bL20 family.

In terms of biological role, binds directly to 23S ribosomal RNA and is necessary for the in vitro assembly process of the 50S ribosomal subunit. It is not involved in the protein synthesizing functions of that subunit. In Mycolicibacterium gilvum (strain PYR-GCK) (Mycobacterium gilvum (strain PYR-GCK)), this protein is Large ribosomal subunit protein bL20.